Here is a 249-residue protein sequence, read N- to C-terminus: uncharacterized protein (249 aa).

A coiled-coil region spans residues 30 to 65 (KVDKLKKLEIKKLEDQKKLKEQEEKHRLTLIRLANA). A disordered region spans residues 66–97 (PPQTNSINNNNNNNNNIKTNRPPLIYGEDKDK).

This is an uncharacterized protein from Dictyostelium discoideum (Social amoeba).